Here is a 399-residue protein sequence, read N- to C-terminus: Carbamoyl phosphate synthase small chain (399 aa).

A CPSase region spans residues 1 to 209; that stretch reads MEKFKLLKLG…SAINKKLHTS (209 aa). S55, G261, and G263 together coordinate L-glutamine. The region spanning 213-399 is the Glutamine amidotransferase type-1 domain; sequence RIIVLDLGVK…VYIIYKSKSS (187 aa). C289 serves as the catalytic Nucleophile. Residues L290, Q293, N329, G331, and F332 each coordinate L-glutamine. Catalysis depends on residues H372 and E374.

This sequence belongs to the CarA family. As to quaternary structure, composed of two chains; the small (or glutamine) chain promotes the hydrolysis of glutamine to ammonia, which is used by the large (or ammonia) chain to synthesize carbamoyl phosphate. Tetramer of heterodimers (alpha,beta)4.

It localises to the plastid. The protein resides in the chloroplast. It carries out the reaction hydrogencarbonate + L-glutamine + 2 ATP + H2O = carbamoyl phosphate + L-glutamate + 2 ADP + phosphate + 2 H(+). It catalyses the reaction L-glutamine + H2O = L-glutamate + NH4(+). It participates in amino-acid biosynthesis; L-arginine biosynthesis; carbamoyl phosphate from bicarbonate: step 1/1. It functions in the pathway pyrimidine metabolism; UMP biosynthesis via de novo pathway; (S)-dihydroorotate from bicarbonate: step 1/3. In terms of biological role, small subunit of the glutamine-dependent carbamoyl phosphate synthetase (CPSase). CPSase catalyzes the formation of carbamoyl phosphate from the ammonia moiety of glutamine, carbonate, and phosphate donated by ATP, constituting the first step of 2 biosynthetic pathways, one leading to arginine and/or urea and the other to pyrimidine nucleotides. The small subunit (glutamine amidotransferase) binds and cleaves glutamine to supply the large subunit with the substrate ammonia. The polypeptide is Carbamoyl phosphate synthase small chain (Cyanidium caldarium (Red alga)).